The primary structure comprises 314 residues: 4-hydroxy-3-methylbut-2-enyl diphosphate reductase (314 aa).

Cys-12 is a [4Fe-4S] cluster binding site. 2 residues coordinate (2E)-4-hydroxy-3-methylbut-2-enyl diphosphate: His-43 and His-81. Dimethylallyl diphosphate-binding residues include His-43 and His-81. Positions 43 and 81 each coordinate isopentenyl diphosphate. A [4Fe-4S] cluster-binding site is contributed by Cys-103. His-131 serves as a coordination point for (2E)-4-hydroxy-3-methylbut-2-enyl diphosphate. His-131 lines the dimethylallyl diphosphate pocket. His-131 is an isopentenyl diphosphate binding site. Glu-133 functions as the Proton donor in the catalytic mechanism. Thr-170 contributes to the (2E)-4-hydroxy-3-methylbut-2-enyl diphosphate binding site. Cys-198 lines the [4Fe-4S] cluster pocket. The (2E)-4-hydroxy-3-methylbut-2-enyl diphosphate site is built by Ser-226, Asn-228, and Ser-271. Residues Ser-226, Asn-228, and Ser-271 each contribute to the dimethylallyl diphosphate site. Isopentenyl diphosphate contacts are provided by Ser-226, Asn-228, and Ser-271.

The protein belongs to the IspH family. [4Fe-4S] cluster is required as a cofactor.

It catalyses the reaction isopentenyl diphosphate + 2 oxidized [2Fe-2S]-[ferredoxin] + H2O = (2E)-4-hydroxy-3-methylbut-2-enyl diphosphate + 2 reduced [2Fe-2S]-[ferredoxin] + 2 H(+). It carries out the reaction dimethylallyl diphosphate + 2 oxidized [2Fe-2S]-[ferredoxin] + H2O = (2E)-4-hydroxy-3-methylbut-2-enyl diphosphate + 2 reduced [2Fe-2S]-[ferredoxin] + 2 H(+). It functions in the pathway isoprenoid biosynthesis; dimethylallyl diphosphate biosynthesis; dimethylallyl diphosphate from (2E)-4-hydroxy-3-methylbutenyl diphosphate: step 1/1. It participates in isoprenoid biosynthesis; isopentenyl diphosphate biosynthesis via DXP pathway; isopentenyl diphosphate from 1-deoxy-D-xylulose 5-phosphate: step 6/6. In terms of biological role, catalyzes the conversion of 1-hydroxy-2-methyl-2-(E)-butenyl 4-diphosphate (HMBPP) into a mixture of isopentenyl diphosphate (IPP) and dimethylallyl diphosphate (DMAPP). Acts in the terminal step of the DOXP/MEP pathway for isoprenoid precursor biosynthesis. The protein is 4-hydroxy-3-methylbut-2-enyl diphosphate reductase of Halalkalibacterium halodurans (strain ATCC BAA-125 / DSM 18197 / FERM 7344 / JCM 9153 / C-125) (Bacillus halodurans).